The chain runs to 499 residues: Maturase K (499 aa).

It belongs to the intron maturase 2 family. MatK subfamily.

The protein resides in the plastid. It localises to the chloroplast. In terms of biological role, usually encoded in the trnK tRNA gene intron. Probably assists in splicing its own and other chloroplast group II introns. This chain is Maturase K, found in Camellia sinensis (Tea plant).